The sequence spans 337 residues: U11/U12 small nuclear ribonucleoprotein 48 kDa protein (337 aa).

The CHHC U11-48K-type zinc-finger motif lies at 55-82 (IAICPYDSNHRMPKSSLTKHMESCRLRK). The Zn(2+) site is built by C58, H64, H74, and C78. Glycyl lysine isopeptide (Lys-Gly) (interchain with G-Cter in SUMO2) cross-links involve residues K87 and K104. Basic and acidic residues predominate over residues 255-276 (HWQEEQGRAGDAAEKNEERRSA). A disordered region spans residues 255–337 (HWQEEQGRAG…HSHKRRKQKI (83 aa)). Residues 294 to 310 (RHRRARSRSPHKRKRNK) are compositionally biased toward basic residues. Positions 311–326 (DKSSESRRRKERDGER) are enriched in basic and acidic residues. The segment covering 327–337 (HHSHKRRKQKI) has biased composition (basic residues).

In terms of assembly, component of the U11/U12 snRNPs that are part of the U12-type spliceosome. Not found in the major spliceosome.

It is found in the nucleus. Its function is as follows. Likely involved in U12-type 5' splice site recognition. The polypeptide is U11/U12 small nuclear ribonucleoprotein 48 kDa protein (Snrnp48) (Mus musculus (Mouse)).